Consider the following 339-residue polypeptide: Fructose-1,6-bisphosphatase class 1 (339 aa).

The Mg(2+) site is built by Glu-92, Asp-114, Leu-116, and Asp-117. Substrate contacts are provided by residues 117–120 (DGSS), Asn-209, and Lys-275. Glu-281 contributes to the Mg(2+) binding site.

The protein belongs to the FBPase class 1 family. Homotetramer. Requires Mg(2+) as cofactor.

The protein resides in the cytoplasm. It carries out the reaction beta-D-fructose 1,6-bisphosphate + H2O = beta-D-fructose 6-phosphate + phosphate. It functions in the pathway carbohydrate biosynthesis; gluconeogenesis. This chain is Fructose-1,6-bisphosphatase class 1, found in Acidithiobacillus ferrooxidans (strain ATCC 53993 / BNL-5-31) (Leptospirillum ferrooxidans (ATCC 53993)).